A 379-amino-acid polypeptide reads, in one-letter code: Stimulator of interferon genes protein (379 aa).

The Cytoplasmic segment spans residues 1–17 (MPHSSLHPSIPCPRGHG). Residues 1 to 190 (MPHSSLHPSI…TYNQHYNNLL (190 aa)) are mediates interaction with ZDHHC1 and ZDHHC11. Residues 18–34 (AQKAALVLLSACLVTLW) form a helical membrane-spanning segment. A Glycyl lysine isopeptide (Lys-Gly) (interchain with G-Cter in ubiquitin) cross-link involves residue lysine 20. Topologically, residues 35 to 44 (GLGEPPEHTL) are lumenal. The helical transmembrane segment at 45–69 (RYLVLHLASLQLGLLLNGVCSLAEE) threads the bilayer. Residues 70-91 (LRHIHSRYRGSYWRTVRACLGC) lie on the Cytoplasmic side of the membrane. S-palmitoyl cysteine attachment occurs at residues cysteine 88 and cysteine 91. A helical transmembrane segment spans residues 92 to 106 (PLRRGALLLLSIYFY). At 107–116 (YSLPNAVGPP) the chain is on the lumenal side. A helical transmembrane segment spans residues 117 to 134 (FTWMLALLGLSQALNILL). Residues 135–379 (GLKGLAPAEI…KPLPLRTDFS (245 aa)) are Cytoplasmic-facing. Residue lysine 150 forms a Glycyl lysine isopeptide (Lys-Gly) (interchain with G-Cter in ubiquitin) linkage. A cyclic dinucleotide-binding domain (CBD) region spans residues 153-340 (FNVAHGLAWS…RHLRQEEKEE (188 aa)). The 2',3'-cGAMP site is built by serine 162 and tyrosine 167. Residues serine 162 and tyrosine 167 each coordinate 3',3'-c-di-GMP. Tyrosine 167 provides a ligand contact to 2',3'-cUAMP. At threonine 229 the chain carries Phosphothreonine. Lysine 236 is covalently cross-linked (Glycyl lysine isopeptide (Lys-Gly) (interchain with G-Cter in ubiquitin)). Arginine 238 contacts 2',3'-cGAMP. Arginine 238 serves as a coordination point for 2',3'-cUAMP. 3',3'-c-di-GMP is bound by residues 238-241 (RVYS) and threonine 263. Serine 241 carries the post-translational modification Phosphoserine. Residue threonine 263 participates in 2',3'-cGAMP binding. Position 263 (threonine 263) interacts with 2',3'-cUAMP. A Glycyl lysine isopeptide (Lys-Gly) (interchain with G-Cter in SUMO) cross-link involves residue lysine 338. The tract at residues 340-379 (EVTVGSLKTSAVPSTSTMSQEPELLISGMEKPLPLRTDFS) is C-terminal tail (CTT). The segment at 341–370 (VTVGSLKTSAVPSTSTMSQEPELLISGMEK) is disordered. Residues 345 to 359 (SLKTSAVPSTSTMSQ) are compositionally biased toward polar residues. Threonine 354 is subject to Phosphothreonine. Serine 355 carries the post-translational modification Phosphoserine; by MAP3K7. At threonine 356 the chain carries Phosphothreonine. Residues serine 358 and serine 366 each carry the phosphoserine; by TBK1 modification. The pLxIS motif signature appears at 363–366 (LLIS).

Belongs to the STING family. As to quaternary structure, homodimer; forms a homodimer in absence of cyclic nucleotide (c-di-GMP or cGAMP); 'Lys-63'-linked ubiquitination at Lys-150 is required for homodimerization. Homotetramer; in presence of cyclic nucleotide (c-di-GMP or cGAMP), forms tetramers and higher-order oligomers through side-by-side packing. Interacts (when phosphorylated) with IRF3; following activation and phosphorylation on the pLxIS motif by TBK1, recruits IRF3. Interacts with RIGI, MAVS and SSR2. Interacts with RNF5 and TRIM56. Interacts with TBK1; when homodimer, leading to subsequent production of IFN-beta. Interacts with IFIT1 and IFIT2. Interacts with TRIM29; this interaction induces STING1 ubiquitination and subsequent degradation. Associates with the MHC-II complex. Interacts with STEEP1; interaction takes place upon cGAMP-activation and STING1 phosphorylation by MAP3K7/TAK1 and promotes STING1 translocation to COPII vesicles. Interacts with SEC24A, SEC24B, and SEC24C; promoting translocation to COPII vesicles. Interacts (when ubiquitinated) with SQSTM1; leading to relocalization to autophagosomes. Interacts with SURF4. Interacts with HNRNPA2B1. Interacts with ZDHHC1; ZDHHC1 constitutively interacts with STING1 and in presence of DNA viruses activates it by promoting its cGAMP-induced oligomerization and the recruitment of downstream signaling components. Interacts with ZDHHC11; in presence of DNA viruses promotes the recruitment of IRF3 to STING1. Interacts with TOMM70. Interacts with isoform IFI16-beta of IFI16. Interacts with TAB1; promoting recruitment of TAB1 to the endoplasmic reticulum membrane and subsequent activation of MAP3K7/TAK1. Interacts (via transmembrane domain) with TMEM203. Interacts with DDX41. Interacts with TMEM120A (via C-terminal domain); regulates the trafficking of STING1 from the ER to the ER-Golgi intermediate compartment to elicit antiviral effects. (Microbial infection) Interacts with human papillomavirus (HPV) protein E7. In terms of assembly, (Microbial infection) Interacts with adenovirus early E1A protein. As to quaternary structure, (Microbial infection) Interacts with herpes simplex virus 1 protein ICP34.5; this interaction inhibits the intracellular DNA sensing pathway. (Microbial infection) Interacts with Chikungunya virus non-structural protein 1; this interaction results in inhibition of cGAS-STING signaling and increased levels of palmitoylated nsP1 and protein stabilization. In terms of assembly, (Microbial infection) Interacts with human cytomegalovirus proteins UL94, UL42 and UL138; these interactions result in the inhibition of cGAS-STING signaling. As to quaternary structure, (Microbial infection) Interacts with varivella virus protein 39; this interaction results in the inhibition of cGAS-STING signaling. Phosphorylation by TBK1 leads to activation and production of IFN-beta. Following cyclic nucleotide (c-di-GMP or cGAMP)-binding, activation and translocation from the endoplasmic reticulum, STING1 is phosphorylated by TBK1 at Ser-366 in the pLxIS motif. The phosphorylated pLxIS motif constitutes an IRF3-binding motif, leading to recruitment of the transcription factor IRF3 to induce type-I interferons and other cytokines. The phosphorylated pLxIS motif facilitates SENP2 recruitment during late phase of viral infection. Phosphorylated on tyrosine residues upon MHC-II aggregation. Dephosphorylation by PPP6C leads to inactivation and decreased production of IFN-beta. Phosphorylation at Ser-358 is also required to activate IRF3. Phosphorylation at Ser-355 by MAP3K7/TAK1 facilitates its interaction with STEEP1, promoting STING1 translocation to COPII vesicles. In terms of processing, ubiquitinated. Ubiquitinated via 'Lys-63'-linked ubiquitin chains in response to double-stranded DNA treatment, leading to relocalization to autophagosomes and subsequent degradation; this process is dependent on SQSTM1. 'Lys-63'-linked ubiquitination mediated by TRIM56 at Lys-150 promotes homodimerization and recruitment of the antiviral kinase TBK1 and subsequent production of IFN-beta. 'Lys-48'-linked polyubiquitination at Lys-150 occurring after viral infection is mediated by RNF5 and leads to proteasomal degradation. 'Lys-11'-linked polyubiquitination at Lys-150 by RNF26 leads to stabilize STING1: it protects STING1 from RNF5-mediated 'Lys-48'-linked polyubiquitination. 'Lys-33'-linked and 'Lys-48'-linked deubiquitinated by USP20; leading to its stabilization and promotion of innate antiviral response. 'Lys-48'-linked deubiquitinated by USP44; leading to its stabilization and promotion of innate antiviral response. Deubiquitinated by USP13; leading to inhibition of innate antiviral response. 'Lys-63'-linked deubiquitinated by USP49; leading to inhibition of the subsequent recruitment of TBK1 to the signaling complex. 'Lys-63'-linked ubiquitination mediated by RNF39 promotes the activation of the cGAS-STING pathway. MARCHF5-mediated ubiquitination prevents the oxidation-induced polymer formation. Post-translationally, (Microbial infection) Deubiquitinated by Epstein-Barr virus BPLF1 on both 'Lys-48' and 'Lys-63'-linked ubiquitin chains; leading to inhibition of cGAS-STING signaling. Sumoylated at Lys-338 by TRIM38 during the early phase of viral infection, promoting its stability by preventing its relocalization to autophagosomes and subsequent degradation. Desumoylated by SENP2 during the late phase of viral infection. In terms of processing, palmitoylation takes place in the Golgi apparatus and creates a platform for the recruitment of TBK1. Ubiquitously expressed. Expressed in skin endothelial cells, alveolar type 2 pneumocytes, bronchial epithelium and alveolar macrophages.

Its subcellular location is the endoplasmic reticulum membrane. The protein resides in the cytoplasm. It localises to the perinuclear region. It is found in the endoplasmic reticulum-Golgi intermediate compartment membrane. The protein localises to the golgi apparatus membrane. Its subcellular location is the cytoplasmic vesicle. The protein resides in the autophagosome membrane. It localises to the mitochondrion outer membrane. It is found in the cell membrane. The enzyme catalyses H(+)(in) = H(+)(out). With respect to regulation, activated upon binding to the hydrolysis-resistant 2'3'-cG(s)A(s)MP, an analog of cGAMP, in which phosphodiester linkages are replaced by phosphothioate linkages. Specifically inhibited by small-molecule H-151 (N-(4-ethylphenyl)-N'-1H-indol-3-yl-urea), which covalently binds Cys-91 and prevents palmitoylation and subsequent activation of STING1. In contrast to mouse protein, not activated by anticancer molecule 5,6-dimethylxanthenone 4-acetic acid (DMXAA). Inhibited by compound 18 ([(3S,4S)-2-(4-tert-butyl-3-chlorophenyl)-3-(2,3-dihydro-1,4-benzodioxin-6-yl)-7-fluoro-1-oxo-1,2,3,4-tetrahydroisoquinolin-4-yl]acetate), a competitive inhibitor with slow dissociation kinetics and good oral bioavailability. Homooligomerization and ability to promote the production of type I interferons is activated by C53, a small benzothiazinone-like compound that binds to the transmembrane regions. in the area of the putative pore. In contrast, compound C53, directly inhibits the proton channel activity and facilitate MAP1LC3B/LC3B lipidation and autophagosome formation. In terms of biological role, facilitator of innate immune signaling that acts as a sensor of cytosolic DNA from bacteria and viruses and promotes the production of type I interferon (IFN-alpha and IFN-beta). Innate immune response is triggered in response to non-CpG double-stranded DNA from viruses and bacteria delivered to the cytoplasm. Acts by binding cyclic dinucleotides: recognizes and binds cyclic di-GMP (c-di-GMP), a second messenger produced by bacteria, cyclic UMP-AMP (2',3'-cUAMP), and cyclic GMP-AMP (cGAMP), a messenger produced by CGAS in response to DNA virus in the cytosol. Upon binding to c-di-GMP, cUAMP or cGAMP, STING1 oligomerizes, translocates from the endoplasmic reticulum and is phosphorylated by TBK1 on the pLxIS motif, leading to recruitment and subsequent activation of the transcription factor IRF3 to induce expression of type I interferon and exert a potent anti-viral state. Exhibits 2',3' phosphodiester linkage-specific ligand recognition: can bind both 2'-3' linked cGAMP (2'-3'-cGAMP) and 3'-3' linked cGAMP but is preferentially activated by 2'-3' linked cGAMP. The preference for 2'-3'-cGAMP, compared to other linkage isomers is probably due to the ligand itself, whichs adopts an organized free-ligand conformation that resembles the STING1-bound conformation and pays low energy costs in changing into the active conformation. In addition to promote the production of type I interferons, plays a direct role in autophagy. Following cGAMP-binding, STING1 buds from the endoplasmic reticulum into COPII vesicles, which then form the endoplasmic reticulum-Golgi intermediate compartment (ERGIC). The ERGIC serves as the membrane source for WIPI2 recruitment and LC3 lipidation, leading to formation of autophagosomes that target cytosolic DNA or DNA viruses for degradation by the lysosome. Promotes autophagy by acting as a proton channel that directs proton efflux from the Golgi to facilitate MAP1LC3B/LC3B lipidation. The autophagy- and interferon-inducing activities can be uncoupled and autophagy induction is independent of TBK1 phosphorylation. Autophagy is also triggered upon infection by bacteria: following c-di-GMP-binding, which is produced by live Gram-positive bacteria, promotes reticulophagy. May be involved in translocon function, the translocon possibly being able to influence the induction of type I interferons. May be involved in transduction of apoptotic signals via its association with the major histocompatibility complex class II (MHC-II). (Microbial infection) Antiviral activity is antagonized by oncoproteins, such as papillomavirus (HPV) protein E7 and adenovirus early E1A protein. Such oncoproteins prevent the ability to sense cytosolic DNA. The chain is Stimulator of interferon genes protein from Homo sapiens (Human).